The sequence spans 142 residues: Hemoglobin subunit alpha (142 aa).

The Globin domain occupies 2–142 (VLSAADKTNV…VSTVLTSKYR (141 aa)). A Phosphoserine modification is found at serine 4. N6-succinyllysine is present on lysine 8. Threonine 9 carries the post-translational modification Phosphothreonine. Lysine 12 carries the N6-succinyllysine modification. Residue lysine 17 is modified to N6-acetyllysine; alternate. The residue at position 17 (lysine 17) is an N6-succinyllysine; alternate. At tyrosine 25 the chain carries Phosphotyrosine. An N6-succinyllysine modification is found at lysine 41. A Phosphoserine modification is found at serine 50. Residue histidine 59 participates in O2 binding. Histidine 88 is a heme b binding site. Residue serine 103 is modified to Phosphoserine. Phosphothreonine is present on threonine 109. Phosphoserine is present on residues serine 125 and serine 132. Phosphothreonine occurs at positions 135 and 138. The residue at position 139 (serine 139) is a Phosphoserine.

The protein belongs to the globin family. As to quaternary structure, heterotetramer of two alpha chains and two beta chains. In terms of tissue distribution, red blood cells.

Functionally, involved in oxygen transport from the lung to the various peripheral tissues. Its function is as follows. Hemopressin acts as an antagonist peptide of the cannabinoid receptor CNR1. Hemopressin-binding efficiently blocks cannabinoid receptor CNR1 and subsequent signaling. This chain is Hemoglobin subunit alpha (HBA), found in Equus caballus (Horse).